The chain runs to 1577 residues: Pentafunctional AROM polypeptide (1577 aa).

Residues 1 to 384 form a 3-dehydroquinate synthase region; sequence MSMKMADPTK…YEPKASVVSN (384 aa). Residues 48-50, 85-88, 116-118, and D121 each bind NAD(+); these read DTN, ENSK, and GGV. A 7-phospho-2-dehydro-3-deoxy-D-arabino-heptonate-binding site is contributed by R132. 141 to 142 is a binding site for NAD(+); that stretch reads TT. The 7-phospho-2-dehydro-3-deoxy-D-arabino-heptonate site is built by D148 and K154. An NAD(+)-binding site is contributed by K163. N164 serves as a coordination point for 7-phospho-2-dehydro-3-deoxy-D-arabino-heptonate. Residues 181-184 and N192 each bind NAD(+); that span reads FIDT. E196 serves as a coordination point for Zn(2+). 7-phospho-2-dehydro-3-deoxy-D-arabino-heptonate-binding positions include 196–199 and K250; that span reads EVIK. E260 functions as the Proton acceptor; for 3-dehydroquinate synthase activity in the catalytic mechanism. Residues 264–268 and H271 each bind 7-phospho-2-dehydro-3-deoxy-D-arabino-heptonate; that span reads RNLLN. H271 provides a ligand contact to Zn(2+). Catalysis depends on H275, which acts as the Proton acceptor; for 3-dehydroquinate synthase activity. H287 and K356 together coordinate 7-phospho-2-dehydro-3-deoxy-D-arabino-heptonate. H287 serves as a coordination point for Zn(2+). Residues 397-842 are EPSP synthase; that stretch reads VIPGVPKSLN…WDALKQKFGV (446 aa). C824 acts as the For EPSP synthase activity in catalysis. The interval 864–1056 is shikimate kinase; that stretch reads NASVIIIGMR…RKKRLSFFVS (193 aa). 871–878 contributes to the ATP binding site; that stretch reads GMRGAGKT. Residues 1057–1277 form a 3-dehydroquinase region; that stretch reads LTLPDLRDTG…AAPGQLSAAE (221 aa). H1180 acts as the Proton acceptor; for 3-dehydroquinate dehydratase activity in catalysis. Residue K1208 is the Schiff-base intermediate with substrate; for 3-dehydroquinate dehydratase activity of the active site. Positions 1290–1577 are shikimate dehydrogenase; that stretch reads AKKFAIFGKP…RNAVLGTNEK (288 aa).

It in the N-terminal section; belongs to the sugar phosphate cyclases superfamily. Dehydroquinate synthase family. This sequence in the 2nd section; belongs to the EPSP synthase family. The protein in the 3rd section; belongs to the shikimate kinase family. In the 4th section; belongs to the type-I 3-dehydroquinase family. It in the C-terminal section; belongs to the shikimate dehydrogenase family. Homodimer. It depends on Zn(2+) as a cofactor.

It is found in the cytoplasm. The catalysed reaction is 7-phospho-2-dehydro-3-deoxy-D-arabino-heptonate = 3-dehydroquinate + phosphate. It carries out the reaction 3-dehydroquinate = 3-dehydroshikimate + H2O. It catalyses the reaction shikimate + NADP(+) = 3-dehydroshikimate + NADPH + H(+). The enzyme catalyses shikimate + ATP = 3-phosphoshikimate + ADP + H(+). The catalysed reaction is 3-phosphoshikimate + phosphoenolpyruvate = 5-O-(1-carboxyvinyl)-3-phosphoshikimate + phosphate. Its pathway is metabolic intermediate biosynthesis; chorismate biosynthesis; chorismate from D-erythrose 4-phosphate and phosphoenolpyruvate: step 2/7. The protein operates within metabolic intermediate biosynthesis; chorismate biosynthesis; chorismate from D-erythrose 4-phosphate and phosphoenolpyruvate: step 3/7. It participates in metabolic intermediate biosynthesis; chorismate biosynthesis; chorismate from D-erythrose 4-phosphate and phosphoenolpyruvate: step 4/7. It functions in the pathway metabolic intermediate biosynthesis; chorismate biosynthesis; chorismate from D-erythrose 4-phosphate and phosphoenolpyruvate: step 5/7. Its pathway is metabolic intermediate biosynthesis; chorismate biosynthesis; chorismate from D-erythrose 4-phosphate and phosphoenolpyruvate: step 6/7. Functionally, the AROM polypeptide catalyzes 5 consecutive enzymatic reactions in prechorismate polyaromatic amino acid biosynthesis. This is Pentafunctional AROM polypeptide from Talaromyces stipitatus (strain ATCC 10500 / CBS 375.48 / QM 6759 / NRRL 1006) (Penicillium stipitatum).